Reading from the N-terminus, the 426-residue chain is MKILLKGGRVIDPAQNLDGQMDLLLENGKIAAIAEAVGSVPEDTRLLDLKGMILLPGLVDMHTHLREPGYEYKETIRSGSEAAAVGGFTSIACMPNTLPVNDNRTVTEYILKRAKECDTVHVYPVAAVSRNSEGKILAEFGDLKEAGAIAFSDDGKPVMNSILMRRALEYASSLDRIIISHCEDLNLSAGGLMNEGKISTELGLPGIPTLAEDVMVARDLLLAEFSGAALHIAHVSSAGAVRMIRDAKKRGVRVTAETTPHYFTLTDEAVTNFNTNTKVSPPLRSREDLQAVREGLRDGTLDAIVTDHAPHALTDKEVEFEYAANGISGLETALALSLTLVDDGLLTLSELVRKMSVNPAKILNIPKGTLRPGADADITVLNPGKTWVVDPSNWRSQGKNTPFFGWTLKGKVIMTLVQGRIVYQED.

Residues histidine 62 and histidine 64 each coordinate Zn(2+). Residues 64–66 and asparagine 96 each bind substrate; that span reads HLR. Residues aspartate 154, histidine 181, histidine 234, and aspartate 307 each coordinate Zn(2+). The active site involves aspartate 307. Histidine 311 provides a ligand contact to substrate.

The protein belongs to the metallo-dependent hydrolases superfamily. DHOase family. Class I DHOase subfamily. Zn(2+) is required as a cofactor.

The catalysed reaction is (S)-dihydroorotate + H2O = N-carbamoyl-L-aspartate + H(+). The protein operates within pyrimidine metabolism; UMP biosynthesis via de novo pathway; (S)-dihydroorotate from bicarbonate: step 3/3. In terms of biological role, catalyzes the reversible cyclization of carbamoyl aspartate to dihydroorotate. In Syntrophus aciditrophicus (strain SB), this protein is Dihydroorotase.